The sequence spans 419 residues: AT-hook motif nuclear-localized protein 4 (419 aa).

Disordered regions lie at residues 1 to 168, 301 to 337, and 382 to 419; these read MEER…SGGG, QQQQQQIKKQRRERLGIPTTTQASNISFGGSAEDPKA, and DLFSSLPGEDREEDEDDLEGEDDEEFGGHSESDTEVPS. Residues 78 to 86 carry the Bipartite nuclear localization signal motif; it reads KKKRGRPRK. Positions 78–90 form a DNA-binding region, a.T hook; the sequence is KKKRGRPRKYNPD. A compositionally biased stretch (polar residues) spans 101 to 112; the sequence is PISSSVPLTSEF. The span at 115–130 shows a compositional bias: basic residues; that stretch reads RKRGRGRGRGRGRGRG. A compositionally biased stretch (low complexity) spans 136–148; sequence GSREPNNNNNDNN. Residues 174–314 form the PPC domain; that stretch reads VSPSFTPHVL…QQIKKQRRER (141 aa). A compositionally biased stretch (polar residues) spans 318–328; that stretch reads PTTTQASNISF. Positions 391–406 are enriched in acidic residues; sequence DREEDEDDLEGEDDEE.

Homodimer. Interacts with AHL3. In terms of tissue distribution, predominantly expressed in the stele of the root meristem with a specificity to the procambium.

Its subcellular location is the nucleus. Transcription factor that specifically binds AT-rich DNA sequences related to the nuclear matrix attachment regions (MARs). Acts redundantly with AHL3 to regulate the formation of tissue boundary between the xylem and procambium in the root meristem. Cell-to-cell movement of AHL4 from the procambium to the xylem is critical for its function in root vascular patterning. The polypeptide is AT-hook motif nuclear-localized protein 4 (Arabidopsis thaliana (Mouse-ear cress)).